The primary structure comprises 242 residues: UPF0246 protein SPP_1571 (242 aa).

The protein belongs to the UPF0246 family.

This is UPF0246 protein SPP_1571 from Streptococcus pneumoniae (strain P1031).